The sequence spans 190 residues: UPF0340 protein BCE33L5016 (190 aa).

Belongs to the UPF0340 family.

In Bacillus cereus (strain ZK / E33L), this protein is UPF0340 protein BCE33L5016.